A 309-amino-acid polypeptide reads, in one-letter code: Probable manganese-dependent inorganic pyrophosphatase (309 aa).

Mn(2+) contacts are provided by H9, D13, D15, D75, H97, and D149.

Belongs to the PPase class C family. Mn(2+) serves as cofactor.

The protein resides in the cytoplasm. It catalyses the reaction diphosphate + H2O = 2 phosphate + H(+). This is Probable manganese-dependent inorganic pyrophosphatase from Bacillus cereus (strain ZK / E33L).